An 820-amino-acid polypeptide reads, in one-letter code: Mitogen-activated protein kinase kinase kinase kinase 2 (820 aa).

The 258-residue stretch at 16–273 (FELLQRVGAG…AEKLLQHPFT (258 aa)) folds into the Protein kinase domain. ATP contacts are provided by residues 22–30 (VGAGTYGDV) and lysine 45. The active-site Proton acceptor is the aspartate 136. The tract at residues 294–314 (LGTPSPEDCELETYDMFPDTI) is PEST1. A Phosphoserine modification is found at serine 328. Residues 344–360 (ETDPLNEPWEEEWTLLG) are PEST2. The disordered stretch occupies residues 387-442 (SEFQELDSPDDTMGTIKRAPFLGPLPTDPPAEEPLSSPPGTLPPPPSGPNSSPLLP). The residue at position 394 (serine 394) is a Phosphoserine. Residues 405–448 (APFLGPLPTDPPAEEPLSSPPGTLPPPPSGPNSSPLLPTAWATM) are PEST3. Residues 422–434 (SSPPGTLPPPPSG) show a composition bias toward pro residues. One can recognise a CNH domain in the interval 482 to 793 (PLRIHAAVTW…IFRVLGAHRD (312 aa)).

Belongs to the protein kinase superfamily. STE Ser/Thr protein kinase family. STE20 subfamily. In terms of assembly, interacts with TRAF2, TRAF6, MAP3K1/MEKK1 and MAP3K11/MLK3. Interacts with RAB8A. Requires Mg(2+) as cofactor. In terms of processing, polyubiquitinated through 'Lys-48'-polyubiquitin chains, allowing proteasomal turnover. Ubiquitination requires the kinase activity of MAP4K2/GCK. Autophosphorylated in response to tumor necrosis factor (TNF), endotoxins or pro-inflammatory stimuli. Autophosphorylation leads to activation. In terms of tissue distribution, highly expressed in germinal center but not mantle zone B-cells. Also expressed in lung, brain and placenta and at lower levels in other tissues examined.

The protein resides in the cytoplasm. It is found in the basolateral cell membrane. It localises to the golgi apparatus membrane. It catalyses the reaction L-seryl-[protein] + ATP = O-phospho-L-seryl-[protein] + ADP + H(+). The enzyme catalyses L-threonyl-[protein] + ATP = O-phospho-L-threonyl-[protein] + ADP + H(+). The tumor necrosis factor (TNF), as well as endotoxins and pro-inflammatory stimuli such as polyinosine-polycytidine (poly(IC)), lipopolysaccharides (LPS), peptidoglycan (PGN), flagellin, or lipid A activate MAP4K2 by promoting its autophosphorylation. Its function is as follows. Serine/threonine-protein kinase which acts as an essential component of the MAP kinase signal transduction pathway. Acts as a MAPK kinase kinase kinase (MAP4K) and is an upstream activator of the stress-activated protein kinase/c-Jun N-terminal kinase (SAP/JNK) signaling pathway and to a lesser extent of the p38 MAPKs signaling pathway. Required for the efficient activation of JNKs by TRAF6-dependent stimuli, including pathogen-associated molecular patterns (PAMPs) such as polyinosine-polycytidine (poly(IC)), lipopolysaccharides (LPS), lipid A, peptidoglycan (PGN), or bacterial flagellin. To a lesser degree, IL-1 and engagement of CD40 also stimulate MAP4K2-mediated JNKs activation. The requirement for MAP4K2/GCK is most pronounced for LPS signaling, and extends to LPS stimulation of c-Jun phosphorylation and induction of IL-8. Enhances MAP3K1 oligomerization, which may relieve N-terminal mediated MAP3K1 autoinhibition and lead to activation following autophosphorylation. Also mediates the SAP/JNK signaling pathway and the p38 MAPKs signaling pathway through activation of the MAP3Ks MAP3K10/MLK2 and MAP3K11/MLK3. May play a role in the regulation of vesicle targeting or fusion. regulation of vesicle targeting or fusion. Activator of the Hippo signaling pathway which plays a pivotal role in organ size control and tumor suppression by restricting proliferation and promoting apoptosis. MAP4Ks act in parallel to and are partially redundant with STK3/MST2 and STK4/MST2 in the phosphorylation and activation of LATS1/2, and establish MAP4Ks as components of the expanded Hippo pathway. In Homo sapiens (Human), this protein is Mitogen-activated protein kinase kinase kinase kinase 2.